The primary structure comprises 146 residues: Large-conductance mechanosensitive channel (146 aa).

2 helical membrane passes run valine 15–valine 35 and glycine 81–isoleucine 101.

The protein belongs to the MscL family. In terms of assembly, homopentamer.

The protein resides in the cell membrane. Functionally, channel that opens in response to stretch forces in the membrane lipid bilayer. May participate in the regulation of osmotic pressure changes within the cell. The polypeptide is Large-conductance mechanosensitive channel (Clostridium beijerinckii (strain ATCC 51743 / NCIMB 8052) (Clostridium acetobutylicum)).